The primary structure comprises 68 residues: Phage-like element PBSX protein XtrA (68 aa).

It to B.subtilis YqaO.

In Bacillus subtilis (strain 168), this protein is Phage-like element PBSX protein XtrA (xtrA).